A 433-amino-acid polypeptide reads, in one-letter code: Pyrimidine-nucleoside phosphorylase (433 aa).

Phosphate is bound at residue 81–83 (KHS). Residues G88 and T90 each contribute to the K(+) site. Phosphate-binding positions include T92, 108 to 110 (KMS), and T120. The substrate site is built by R168 and K187. K(+) is bound by residues L243, A246, and E255.

It belongs to the thymidine/pyrimidine-nucleoside phosphorylase family. As to quaternary structure, homodimer. Requires K(+) as cofactor.

It carries out the reaction uridine + phosphate = alpha-D-ribose 1-phosphate + uracil. The enzyme catalyses thymidine + phosphate = 2-deoxy-alpha-D-ribose 1-phosphate + thymine. The catalysed reaction is 2'-deoxyuridine + phosphate = 2-deoxy-alpha-D-ribose 1-phosphate + uracil. In terms of biological role, catalyzes phosphorolysis of the pyrimidine nucleosides uridine, thymidine and 2'-deoxyuridine with the formation of the corresponding pyrimidine base and ribose-1-phosphate. This chain is Pyrimidine-nucleoside phosphorylase, found in Bacillus subtilis (strain 168).